A 73-amino-acid chain; its full sequence is Protein kish (73 aa).

The signal sequence occupies residues Met-1–Cys-21. The Lumenal portion of the chain corresponds to Thr-22–Arg-52. A helical membrane pass occupies residues Ala-53–Ser-73.

The protein belongs to the KISH family.

It localises to the golgi apparatus membrane. The protein resides in the endoplasmic reticulum membrane. Its function is as follows. Involved in the early part of the secretory pathway. In Schizosaccharomyces pombe (strain 972 / ATCC 24843) (Fission yeast), this protein is Protein kish (ksh1).